The chain runs to 144 residues: High mobility group B protein 2 (144 aa).

Composition is skewed to basic and acidic residues over residues 1 to 12 and 73 to 94; these read MKGAKSKTETRS and AGDK…KAEK. Disordered stretches follow at residues 1–42, 57–94, and 106–144; these read MKGA…KRPA, KKEN…KAEK, and YNKK…EDDD. The segment at residues 38-107 is a DNA-binding region (HMG box); sequence PKRPASAFFV…EYEKNIKAYN (70 aa). Phosphoserine is present on serine 125. Residues 127 to 144 show a composition bias toward acidic residues; the sequence is VNDEDDAEDGSEEEEDDD.

It belongs to the HMGB family. In terms of tissue distribution, mostly expressed in cotyledons, hypocotyls, leaves, and flowers (excluding pedicels), also present in roots and stems.

It localises to the nucleus. It is found in the cytoplasm. The protein localises to the cytosol. Its function is as follows. Binds preferentially double-stranded DNA. Confers sensitivity to salt and drought stresses. The sequence is that of High mobility group B protein 2 (HMGB2) from Arabidopsis thaliana (Mouse-ear cress).